The primary structure comprises 423 residues: Hypoxia responsive morphology factor B (423 aa).

A Bipartite nuclear localization signal motif is present at residues lysine 46 to valine 69. The RNA recognition motif (RRM)-like domain stretch occupies residues threonine 157 to proline 187. A compositionally biased stretch (polar residues) spans leucine 243–isoleucine 257. The interval leucine 243 to serine 273 is disordered.

The protein belongs to the hrmA family.

Its subcellular location is the nucleus. Probably modulates the generation of the hypoxia-typic morphotype (called H-MORPH) with altered biofilm architecture that leads to increased host inflammation, rapid disease progression, and mortality in a murine model of invasive aspergillosis. This chain is Hypoxia responsive morphology factor B, found in Aspergillus fumigatus (strain CBS 144.89 / FGSC A1163 / CEA10) (Neosartorya fumigata).